A 140-amino-acid chain; its full sequence is Large ribosomal subunit protein uL14 (140 aa).

It belongs to the universal ribosomal protein uL14 family. In terms of assembly, component of the large ribosomal subunit.

The protein resides in the cytoplasm. Functionally, component of the large ribosomal subunit. The ribosome is a large ribonucleoprotein complex responsible for the synthesis of proteins in the cell. This is Large ribosomal subunit protein uL14 (rpl23) from Danio rerio (Zebrafish).